We begin with the raw amino-acid sequence, 279 residues long: MGIVFNYIDPVAFNLGPLSVRWYGIIIAVGILLGYFVAQRALVKAGLHKDTLVDIIFYSALFGFIAARIYFVIFQWPYYAENPGEIIKIWHGGIAIHGGLIGGFIAGVIVCKVKNLNPFQIGDIVAPSIILAQGIGRWGNFMNHEAHGGPVSRAFLEQLHLPNFIIENMYINSQYYHPTFLYESIWDVAGFIILVNIRKHLKLGETFFLYLTWYSIGRFFIEGLRTDSLMLTSNIRVAQLVSILLILISISLIVYRRIKYNPPLYSKVGALPWPTKKVK.

The next 3 helical transmembrane spans lie at 18–38, 55–75, and 89–109; these read LSVRWYGIIIAVGILLGYFVA, IIFYSALFGFIAARIYFVIFQ, and IWHGGIAIHGGLIGGFIAGVI. Arg137 is a binding site for a 1,2-diacyl-sn-glycero-3-phospho-(1'-sn-glycerol). A run of 2 helical transmembrane segments spans residues 203–223 and 235–255; these read LGETFFLYLTWYSIGRFFIEG and IRVAQLVSILLILISISLIVY.

Belongs to the Lgt family.

Its subcellular location is the cell membrane. It catalyses the reaction L-cysteinyl-[prolipoprotein] + a 1,2-diacyl-sn-glycero-3-phospho-(1'-sn-glycerol) = an S-1,2-diacyl-sn-glyceryl-L-cysteinyl-[prolipoprotein] + sn-glycerol 1-phosphate + H(+). It functions in the pathway protein modification; lipoprotein biosynthesis (diacylglyceryl transfer). In terms of biological role, catalyzes the transfer of the diacylglyceryl group from phosphatidylglycerol to the sulfhydryl group of the N-terminal cysteine of a prolipoprotein, the first step in the formation of mature lipoproteins. This is Phosphatidylglycerol--prolipoprotein diacylglyceryl transferase from Staphylococcus aureus (strain bovine RF122 / ET3-1).